The chain runs to 92 residues: Conotoxin Mr15.3 (92 aa).

The signal sequence occupies residues 1 to 20; it reads MSTLKMMLLILLLLLPMATF. The propeptide occupies 21–53; the sequence is DSDGQAIPGGGIPSAVNSRVRGDEKSGRSLEKR.

Belongs to the conotoxin N superfamily. Post-translationally, contains 4 disulfide bonds. In terms of tissue distribution, expressed by the venom duct.

The protein resides in the secreted. The protein is Conotoxin Mr15.3 of Conus marmoreus (Marble cone).